Consider the following 123-residue polypeptide: uncharacterized protein (123 aa).

Positions 35–100 (SQDHGDDPAE…SSGAPASQHC (66 aa)) are disordered. Over residues 37-48 (DHGDDPAERGRT) the composition is skewed to basic and acidic residues. Residues 85–97 (ALPASPSSGAPAS) are compositionally biased toward low complexity.

This is an uncharacterized protein from Homo sapiens (Human).